The primary structure comprises 577 residues: Arginine--tRNA ligase (577 aa).

The 'HIGH' region motif lies at 122-132; sequence PNVAKEMHVGH.

The protein belongs to the class-I aminoacyl-tRNA synthetase family. In terms of assembly, monomer.

It localises to the cytoplasm. The enzyme catalyses tRNA(Arg) + L-arginine + ATP = L-arginyl-tRNA(Arg) + AMP + diphosphate. The sequence is that of Arginine--tRNA ligase from Salmonella arizonae (strain ATCC BAA-731 / CDC346-86 / RSK2980).